The chain runs to 952 residues: UvrABC system protein A (952 aa).

Gly-38–Ser-45 lines the ATP pocket. The C4-type zinc finger occupies Cys-259–Cys-286. ABC transporter domains are found at residues Phe-316–Ile-595 and Gly-615–Ser-944. An ATP-binding site is contributed by Gly-647 to Ser-654. Residues Cys-746–Cys-772 form a C4-type zinc finger.

Belongs to the ABC transporter superfamily. UvrA family. As to quaternary structure, forms a heterotetramer with UvrB during the search for lesions.

The protein resides in the cytoplasm. In terms of biological role, the UvrABC repair system catalyzes the recognition and processing of DNA lesions. UvrA is an ATPase and a DNA-binding protein. A damage recognition complex composed of 2 UvrA and 2 UvrB subunits scans DNA for abnormalities. When the presence of a lesion has been verified by UvrB, the UvrA molecules dissociate. This is UvrABC system protein A from Mycoplasma genitalium (strain ATCC 33530 / DSM 19775 / NCTC 10195 / G37) (Mycoplasmoides genitalium).